Here is a 132-residue protein sequence, read N- to C-terminus: Translation initiation factor 2 subunit beta (132 aa).

Positions 1–30 (MDYEEQLDRAMDEKPDVTGSETRFEVPDPN) are disordered.

The protein belongs to the eIF-2-beta/eIF-5 family. Heterotrimer composed of an alpha, a beta and a gamma chain.

Its function is as follows. eIF-2 functions in the early steps of protein synthesis by forming a ternary complex with GTP and initiator tRNA. This is Translation initiation factor 2 subunit beta from Halobacterium salinarum (strain ATCC 29341 / DSM 671 / R1).